Consider the following 493-residue polypeptide: Tripartite motif-containing protein 5 (493 aa).

Ala2 is subject to N-acetylalanine. The RING-type zinc-finger motif lies at 15-58 (CPICLELLTQPLSLDCGHSFCQACLTANHKTSMPDGERSCPVCR). Ser85 carries the post-translational modification Phosphoserine. A B box-type zinc finger spans residues 90-131 (QKVDHCARHGEKLLLFCREDRKVICWLCERSQEHRGHHTFLM). Zn(2+) is bound by residues Cys95, His98, Cys117, and His123. The stretch at 130-240 (LMEEVAQEYQ…LISDLEHRLQ (111 aa)) forms a coiled coil. The required for interaction with GABARAP and for autophagy stretch occupies residues 185-198 (FEQLRHILDWVESN). Residues 281-493 (LQVTLEVLRE…VPMTLCSPSS (213 aa)) enclose the B30.2/SPRY domain.

Belongs to the TRIM/RBCC family. Can form homodimers and homotrimers. In addition to lower-order dimerization, also exhibits a higher-order multimerization and both low- and high-order multimerizations are essential for its restriction activity. Interacts with BTBD1 and BTBD2. Interacts with PSMC4, PSMC5, PSMD7 and HSPA8/HSC70. Interacts (via B30.2/SPRY domain) with HSPA1A/B. Interacts with PSMC2, MAP3K7/TAK1, TAB2 and TAB3. Interacts with SQSTM1. Interacts with TRIM6 and TRIM34. Interacts with ULK1 (phosphorylated form), GABARAP, GABARAPL1, GABARAPL2, MAP1LC3A, MAP1LC3C and BECN1. In terms of processing, degraded in a proteasome-independent fashion in the absence of viral infection but in a proteasome-dependent fashion following exposure to restriction sensitive virus. Autoubiquitinated in a RING finger- and UBE2D2-dependent manner. Monoubiquitinated by TRIM21. Deubiquitinated by Yersinia YopJ. Ubiquitination may not lead to proteasomal degradation.

It localises to the cytoplasm. The protein localises to the nucleus. The catalysed reaction is S-ubiquitinyl-[E2 ubiquitin-conjugating enzyme]-L-cysteine + [acceptor protein]-L-lysine = [E2 ubiquitin-conjugating enzyme]-L-cysteine + N(6)-ubiquitinyl-[acceptor protein]-L-lysine.. Its pathway is protein modification; protein ubiquitination. In terms of biological role, capsid-specific restriction factor that prevents infection from non-host-adapted retroviruses. Blocks viral replication early in the life cycle, after viral entry but before reverse transcription. In addition to acting as a capsid-specific restriction factor, also acts as a pattern recognition receptor that activates innate immune signaling in response to the retroviral capsid lattice. Binding to the viral capsid triggers its E3 ubiquitin ligase activity, and in concert with the heterodimeric ubiquitin conjugating enzyme complex UBE2V1-UBE2N (also known as UBC13-UEV1A complex) generates 'Lys-63'-linked polyubiquitin chains, which in turn are catalysts in the autophosphorylation of the MAP3K7/TAK1 complex (includes TAK1, TAB2, and TAB3). Activation of the MAP3K7/TAK1 complex by autophosphorylation results in the induction and expression of NF-kappa-B and MAPK-responsive inflammatory genes, thereby leading to an innate immune response in the infected cell. Plays a role in regulating autophagy through activation of autophagy regulator BECN1 by causing its dissociation from its inhibitors BCL2 and TAB2. This chain is Tripartite motif-containing protein 5 (TRIM5), found in Hylobates lar (Lar gibbon).